A 284-amino-acid polypeptide reads, in one-letter code: ASC1-like protein 3 (284 aa).

The next 6 membrane-spanning stretches (helical) occupy residues 9 to 29 (SSFF…RFFL), 69 to 89 (LTYY…EPWS), 108 to 128 (LMLF…ALVA), 148 to 168 (ILIG…ILAL), 195 to 215 (FGLF…FWII), and 243 to 263 (MLLT…LMIM). Positions 60-267 (VKFSESIWKL…ICLMIMKQLN (208 aa)) constitute a TLC domain.

It is found in the endoplasmic reticulum membrane. Mediates resistance to sphinganine-analog mycotoxins (SAMs) by restoring the sphingolipid biosynthesis. Could salvage the transport of GPI-anchored proteins from the endoplasmic reticulum to the Golgi apparatus in ceramides-depleted cells after SAM exposure. The protein is ASC1-like protein 3 of Oryza sativa subsp. japonica (Rice).